A 201-amino-acid chain; its full sequence is MGKLSILSKRKYTMKNQIQFSTFNFKDLPVRVILDPKGEFWFCGTDVCHILGYTNSRKALQDHCKQGGVTKRYTPTKSADQEMTFINEPNLYRLIIKSRKPEAEPFEAWVFEEVLPQIRKTGKYQLQPQQLALPEPEKKFSFEFTEYELQQLVWLWFAFMRGIVTFQHIEKAFKALGSNMSGDIYGQAYEYLSVYAQQTKS.

The Bro-N domain occupies 15 to 122; it reads KNQIQFSTFN…EVLPQIRKTG (108 aa).

This is an uncharacterized protein from Haemophilus influenzae (strain ATCC 51907 / DSM 11121 / KW20 / Rd).